The following is a 62-amino-acid chain: Photosystem II reaction center protein Z (62 aa).

Helical transmembrane passes span 8 to 28 (SVFA…VALA) and 41 to 61 (FSGV…NSFI).

It belongs to the PsbZ family. In terms of assembly, PSII is composed of 1 copy each of membrane proteins PsbA, PsbB, PsbC, PsbD, PsbE, PsbF, PsbH, PsbI, PsbJ, PsbK, PsbL, PsbM, PsbT, PsbY, PsbZ, Psb30/Ycf12, at least 3 peripheral proteins of the oxygen-evolving complex and a large number of cofactors. It forms dimeric complexes.

It localises to the plastid. It is found in the chloroplast thylakoid membrane. In terms of biological role, may control the interaction of photosystem II (PSII) cores with the light-harvesting antenna, regulates electron flow through the 2 photosystem reaction centers. PSII is a light-driven water plastoquinone oxidoreductase, using light energy to abstract electrons from H(2)O, generating a proton gradient subsequently used for ATP formation. This chain is Photosystem II reaction center protein Z, found in Cryptomeria japonica (Japanese cedar).